Reading from the N-terminus, the 729-residue chain is Fatty acid oxidation complex subunit alpha (729 aa).

The segment at 1–189 (MLYKGDTLYL…KIGLVDGVVK (189 aa)) is enoyl-CoA hydratase/isomerase. Residue Asp-296 participates in substrate binding. The segment at 311 to 729 (ETPKQAAVLG…ARPVGDLKTA (419 aa)) is 3-hydroxyacyl-CoA dehydrogenase. NAD(+) contacts are provided by residues Met-324, Asp-343, 400-402 (VVE), Lys-407, and Ser-429. The active-site For 3-hydroxyacyl-CoA dehydrogenase activity is His-450. NAD(+) is bound at residue Asn-453. Substrate contacts are provided by Asn-500 and Tyr-660. The tract at residues 708–729 (RHNEPYYPPVEPARPVGDLKTA) is disordered.

The protein in the N-terminal section; belongs to the enoyl-CoA hydratase/isomerase family. In the C-terminal section; belongs to the 3-hydroxyacyl-CoA dehydrogenase family. In terms of assembly, heterotetramer of two alpha chains (FadB) and two beta chains (FadA).

The catalysed reaction is a (3S)-3-hydroxyacyl-CoA + NAD(+) = a 3-oxoacyl-CoA + NADH + H(+). It carries out the reaction a (3S)-3-hydroxyacyl-CoA = a (2E)-enoyl-CoA + H2O. It catalyses the reaction a 4-saturated-(3S)-3-hydroxyacyl-CoA = a (3E)-enoyl-CoA + H2O. The enzyme catalyses (3S)-3-hydroxybutanoyl-CoA = (3R)-3-hydroxybutanoyl-CoA. The catalysed reaction is a (3Z)-enoyl-CoA = a 4-saturated (2E)-enoyl-CoA. It carries out the reaction a (3E)-enoyl-CoA = a 4-saturated (2E)-enoyl-CoA. It functions in the pathway lipid metabolism; fatty acid beta-oxidation. Functionally, involved in the aerobic and anaerobic degradation of long-chain fatty acids via beta-oxidation cycle. Catalyzes the formation of 3-oxoacyl-CoA from enoyl-CoA via L-3-hydroxyacyl-CoA. It can also use D-3-hydroxyacyl-CoA and cis-3-enoyl-CoA as substrate. This chain is Fatty acid oxidation complex subunit alpha, found in Escherichia coli (strain UTI89 / UPEC).